A 184-amino-acid polypeptide reads, in one-letter code: dITP/XTP pyrophosphatase (184 aa).

8–13 (TGNKGK) lines the substrate pocket. Mg(2+)-binding residues include E37 and D66. The active-site Proton acceptor is D66. Residues S67, 142–145 (FGYD), K163, and 168–169 (HR) contribute to the substrate site.

It belongs to the HAM1 NTPase family. Homodimer. It depends on Mg(2+) as a cofactor.

It carries out the reaction XTP + H2O = XMP + diphosphate + H(+). The enzyme catalyses dITP + H2O = dIMP + diphosphate + H(+). It catalyses the reaction ITP + H2O = IMP + diphosphate + H(+). Pyrophosphatase that catalyzes the hydrolysis of nucleoside triphosphates to their monophosphate derivatives, with a high preference for the non-canonical purine nucleotides XTP (xanthosine triphosphate), dITP (deoxyinosine triphosphate) and ITP. Seems to function as a house-cleaning enzyme that removes non-canonical purine nucleotides from the nucleotide pool, thus preventing their incorporation into DNA/RNA and avoiding chromosomal lesions. The chain is dITP/XTP pyrophosphatase from Methanosarcina acetivorans (strain ATCC 35395 / DSM 2834 / JCM 12185 / C2A).